The chain runs to 168 residues: uncharacterized protein (168 aa).

This is an uncharacterized protein from Saccharomyces cerevisiae (strain ATCC 204508 / S288c) (Baker's yeast).